Consider the following 171-residue polypeptide: Signal peptidase complex catalytic subunit SEC11 (171 aa).

Over 1–6 the chain is Cytoplasmic; sequence MNIRQQ. Residues 7–24 traverse the membrane as a helical; Signal-anchor for type II membrane protein segment; it reads LVQLLNLAMVLSTAFMFW. Residues 25-171 are Lumenal-facing; the sequence is KGLGLVTNSN…MALSTLLTRE (147 aa). Catalysis depends on charge relay system residues Ser-44, His-83, and Asp-113. Positions 157–168 are C-terminal short (CTS) helix; the sequence is GLLGLMALSTLL.

Belongs to the peptidase S26B family. As to quaternary structure, component of the signal peptidase complex (SPC) composed of a catalytic subunit SEC11 and three accessory subunits SPC1, SPC2 and SPC3. The complex induces a local thinning of the ER membrane which is used to measure the length of the signal peptide (SP) h-region of protein substrates. This ensures the selectivity of the complex towards h-regions shorter than 18-20 amino acids. SPC associates with the translocon complex.

The protein localises to the endoplasmic reticulum membrane. The enzyme catalyses Cleavage of hydrophobic, N-terminal signal or leader sequences from secreted and periplasmic proteins.. Functionally, catalytic component of the signal peptidase complex (SPC) which catalyzes the cleavage of N-terminal signal sequences from nascent proteins as they are translocated into the lumen of the endoplasmic reticulum. Specifically cleaves N-terminal signal peptides that contain a hydrophobic alpha-helix (h-region) shorter than 18-20 amino acids. This is Signal peptidase complex catalytic subunit SEC11 (SEC11) from Komagataella phaffii (strain GS115 / ATCC 20864) (Yeast).